The primary structure comprises 322 residues: tRNA-dihydrouridine synthase B (322 aa).

Residues P16–A18 and Q70 contribute to the FMN site. C100 functions as the Proton donor in the catalytic mechanism. FMN is bound by residues K139, N200–D202, and G224–R225.

The protein belongs to the Dus family. DusB subfamily. It depends on FMN as a cofactor.

The enzyme catalyses a 5,6-dihydrouridine in tRNA + NAD(+) = a uridine in tRNA + NADH + H(+). It catalyses the reaction a 5,6-dihydrouridine in tRNA + NADP(+) = a uridine in tRNA + NADPH + H(+). Functionally, catalyzes the synthesis of 5,6-dihydrouridine (D), a modified base found in the D-loop of most tRNAs, via the reduction of the C5-C6 double bond in target uridines. The sequence is that of tRNA-dihydrouridine synthase B from Vibrio parahaemolyticus serotype O3:K6 (strain RIMD 2210633).